The chain runs to 158 residues: L-alanine exporter AlaE (158 aa).

4 helical membrane-spanning segments follow: residues 23–43, 53–73, 92–112, and 117–137; these read FAMV…VSGM, LVAI…RDAV, VIAY…FVGA, and IITA…AYGY.

Belongs to the AlaE exporter family.

It localises to the cell inner membrane. Its function is as follows. Exports L-alanine. The sequence is that of L-alanine exporter AlaE from Cronobacter sakazakii (strain ATCC BAA-894) (Enterobacter sakazakii).